The sequence spans 509 residues: Maturase K (509 aa).

Belongs to the intron maturase 2 family. MatK subfamily.

It is found in the plastid. The protein localises to the chloroplast. Its function is as follows. Usually encoded in the trnK tRNA gene intron. Probably assists in splicing its own and other chloroplast group II introns. This is Maturase K from Nicotiana glutinosa (Tobacco).